Consider the following 293-residue polypeptide: Nucleotide-binding protein BCQ_4976 (293 aa).

ATP is bound at residue 14–21 (GMSGAGKT). 65–68 (DLRG) is a binding site for GTP.

This sequence belongs to the RapZ-like family.

Functionally, displays ATPase and GTPase activities. This chain is Nucleotide-binding protein BCQ_4976, found in Bacillus cereus (strain Q1).